The chain runs to 226 residues: V-type proton ATPase subunit E (226 aa).

Belongs to the V-ATPase E subunit family. In terms of assembly, V-ATPase is a heteromultimeric enzyme composed of a peripheral catalytic V1 complex (components A to H) attached to an integral membrane V0 proton pore complex (components: a, c, c', c'' and d).

In terms of biological role, subunit of the peripheral V1 complex of vacuolar ATPase essential for assembly or catalytic function. V-ATPase is responsible for acidifying a variety of intracellular compartments in eukaryotic cells. The chain is V-type proton ATPase subunit E (VATE) from Mesembryanthemum crystallinum (Common ice plant).